We begin with the raw amino-acid sequence, 367 residues long: UDP-N-acetylglucosamine--N-acetylmuramyl-(pentapeptide) pyrophosphoryl-undecaprenol N-acetylglucosamine transferase (367 aa).

UDP-N-acetyl-alpha-D-glucosamine is bound by residues 13 to 15 (TGG), Asn125, Arg165, Ser192, and Gln293.

The protein belongs to the glycosyltransferase 28 family. MurG subfamily.

Its subcellular location is the cell inner membrane. It carries out the reaction di-trans,octa-cis-undecaprenyl diphospho-N-acetyl-alpha-D-muramoyl-L-alanyl-D-glutamyl-meso-2,6-diaminopimeloyl-D-alanyl-D-alanine + UDP-N-acetyl-alpha-D-glucosamine = di-trans,octa-cis-undecaprenyl diphospho-[N-acetyl-alpha-D-glucosaminyl-(1-&gt;4)]-N-acetyl-alpha-D-muramoyl-L-alanyl-D-glutamyl-meso-2,6-diaminopimeloyl-D-alanyl-D-alanine + UDP + H(+). It participates in cell wall biogenesis; peptidoglycan biosynthesis. Its function is as follows. Cell wall formation. Catalyzes the transfer of a GlcNAc subunit on undecaprenyl-pyrophosphoryl-MurNAc-pentapeptide (lipid intermediate I) to form undecaprenyl-pyrophosphoryl-MurNAc-(pentapeptide)GlcNAc (lipid intermediate II). This chain is UDP-N-acetylglucosamine--N-acetylmuramyl-(pentapeptide) pyrophosphoryl-undecaprenol N-acetylglucosamine transferase, found in Jannaschia sp. (strain CCS1).